A 583-amino-acid polypeptide reads, in one-letter code: Glycine--tRNA ligase (583 aa).

Substrate-binding residues include arginine 100 and glutamate 166. ATP contacts are provided by residues arginine 198–glutamate 200, valine 208–phenylalanine 213, glutamate 328–valine 329, and glycine 443–arginine 446. Phenylalanine 213–glutamate 217 provides a ligand contact to substrate. Glutamate 439–glycine 443 contributes to the substrate binding site.

The protein belongs to the class-II aminoacyl-tRNA synthetase family.

Its subcellular location is the cytoplasm. The enzyme catalyses tRNA(Gly) + glycine + ATP = glycyl-tRNA(Gly) + AMP + diphosphate. In terms of biological role, catalyzes the attachment of glycine to tRNA(Gly). The polypeptide is Glycine--tRNA ligase (Aeropyrum pernix (strain ATCC 700893 / DSM 11879 / JCM 9820 / NBRC 100138 / K1)).